Consider the following 1169-residue polypeptide: Translation initiation factor IF-2 (1169 aa).

Disordered stretches follow at residues I69–I108 and A139–A568. Composition is skewed to basic and acidic residues over residues A71–N83 and H92–N102. A compositionally biased stretch (polar residues) spans A139–N156. Over residues L157 to P171 the composition is skewed to basic and acidic residues. Low complexity predominate over residues N196–N214. The segment covering A231–S248 has biased composition (polar residues). Over residues N265–Q281 the composition is skewed to low complexity. Composition is skewed to polar residues over residues I282 to G294, M412 to K432, and N439 to P455. A compositionally biased stretch (basic and acidic residues) spans G472–R486. The segment covering K544–R560 has biased composition (basic residues). Residues K661–E838 enclose the tr-type G domain. The G1 stretch occupies residues G670–T677. GTP is bound at residue G670 to T677. Residues G695–H699 are G2. A G3 region spans residues D720–G723. Residues D720–H724 and N774–D777 contribute to the GTP site. The tract at residues N774–D777 is G4. The G5 stretch occupies residues S810–I812.

It belongs to the TRAFAC class translation factor GTPase superfamily. Classic translation factor GTPase family. IF-2 subfamily.

Its subcellular location is the cytoplasm. One of the essential components for the initiation of protein synthesis. Protects formylmethionyl-tRNA from spontaneous hydrolysis and promotes its binding to the 30S ribosomal subunits. Also involved in the hydrolysis of GTP during the formation of the 70S ribosomal complex. This is Translation initiation factor IF-2 from Prochlorococcus marinus subsp. pastoris (strain CCMP1986 / NIES-2087 / MED4).